A 213-amino-acid polypeptide reads, in one-letter code: Putative protein Brevis radix-like 3 (213 aa).

The tract at residues 7 to 27 (CSSKEGGEDGSRGAATPHGRD) is disordered. The region spanning 158–213 (REWTAQVEPGVQITFVTLPGGGNDLKRIRFSRERFGEDRAKVWWEHNRDRIQAQYL) is the BRX domain.

This sequence belongs to the BRX family.

It localises to the nucleus. This chain is Putative protein Brevis radix-like 3 (BRXL3), found in Oryza sativa subsp. japonica (Rice).